Reading from the N-terminus, the 167-residue chain is Leukotoxin-activating lysine-acyltransferase LktC serotype T3 (167 aa).

Catalysis depends on residues His-22 and Asp-91.

This sequence belongs to the RTX toxin acyltransferase family.

It localises to the cytoplasm. It carries out the reaction a fatty acyl-[ACP] + L-lysyl-[protein] = N(6)-(fatty acyl)-L-lysyl-[protein] + holo-[ACP] + H(+). In terms of biological role, involved in fatty acylation of the protoxin (LktA) at two internal lysine residues, thereby converting it to the active toxin. The chain is Leukotoxin-activating lysine-acyltransferase LktC serotype T3 (lktC) from Mannheimia haemolytica (Pasteurella haemolytica).